We begin with the raw amino-acid sequence, 1535 residues long: ABC multidrug transporter atrF (1535 aa).

Residues methionine 1 to tyrosine 115 form a disordered region. N-linked (GlcNAc...) asparagine glycosylation is present at asparagine 33. Positions threonine 34–aspartate 45 are enriched in low complexity. A compositionally biased stretch (basic and acidic residues) spans alanine 46–threonine 76. The segment covering serine 79–serine 93 has biased composition (basic residues). N-linked (GlcNAc...) asparagine glycosylation is found at asparagine 149, asparagine 274, asparagine 287, and asparagine 351. The ABC transporter 1 domain occupies valine 185–glutamate 427. 7 helical membrane-spanning segments follow: residues leucine 540–glycine 560, glycine 573–valine 593, valine 618–phenylalanine 638, alanine 646–leucine 666, alanine 680–proline 700, glycine 703–serine 723, and phenylalanine 791–valine 811. The interval lysine 834 to alanine 868 is disordered. The ABC transporter 2 domain occupies phenylalanine 879–glycine 1117. A glycan (N-linked (GlcNAc...) asparagine) is linked at asparagine 892. An ATP-binding site is contributed by glycine 915–threonine 922. 6 helical membrane-spanning segments follow: residues tyrosine 1212–leucine 1232, isoleucine 1246–isoleucine 1266, isoleucine 1295–phenylalanine 1315, serine 1320–glycine 1340, tryptophan 1342–valine 1362, and tryptophan 1384–valine 1406. N-linked (GlcNAc...) asparagine glycosylation is present at asparagine 1459. 2 consecutive transmembrane segments (helical) span residues cysteine 1477–tyrosine 1497 and glycine 1503–lysine 1523.

It belongs to the ABC transporter superfamily. ABCG family. PDR (TC 3.A.1.205) subfamily.

The protein localises to the cell membrane. The catalysed reaction is voriconazole(in) + ATP + H2O = voriconazole(out) + ADP + phosphate + H(+). Its function is as follows. Pleiotropic ABC efflux transporter involved in the basal level of azole susceptibility. Confers resistance to voriconazole. The chain is ABC multidrug transporter atrF from Aspergillus flavus (strain ATCC 200026 / FGSC A1120 / IAM 13836 / NRRL 3357 / JCM 12722 / SRRC 167).